The following is a 141-amino-acid chain: S-adenosylmethionine decarboxylase proenzyme (141 aa).

The active-site Schiff-base intermediate with substrate; via pyruvic acid is Ser-63. The residue at position 63 (Ser-63) is a Pyruvic acid (Ser); by autocatalysis. The active-site Proton acceptor; for processing activity is His-68. Residue Cys-83 is the Proton donor; for catalytic activity of the active site.

The protein belongs to the prokaryotic AdoMetDC family. Type 1 subfamily. As to quaternary structure, heterotetramer of two alpha and two beta chains arranged as a dimer of alpha/beta heterodimers. Requires pyruvate as cofactor. Is synthesized initially as an inactive proenzyme. Formation of the active enzyme involves a self-maturation process in which the active site pyruvoyl group is generated from an internal serine residue via an autocatalytic post-translational modification. Two non-identical subunits are generated from the proenzyme in this reaction, and the pyruvate is formed at the N-terminus of the alpha chain, which is derived from the carboxyl end of the proenzyme. The post-translation cleavage follows an unusual pathway, termed non-hydrolytic serinolysis, in which the side chain hydroxyl group of the serine supplies its oxygen atom to form the C-terminus of the beta chain, while the remainder of the serine residue undergoes an oxidative deamination to produce ammonia and the pyruvoyl group blocking the N-terminus of the alpha chain.

It carries out the reaction S-adenosyl-L-methionine + H(+) = S-adenosyl 3-(methylsulfanyl)propylamine + CO2. Its pathway is amine and polyamine biosynthesis; S-adenosylmethioninamine biosynthesis; S-adenosylmethioninamine from S-adenosyl-L-methionine: step 1/1. In terms of biological role, catalyzes the decarboxylation of S-adenosylmethionine to S-adenosylmethioninamine (dcAdoMet), the propylamine donor required for the synthesis of the polyamines spermine and spermidine from the diamine putrescine. The chain is S-adenosylmethionine decarboxylase proenzyme from Thermococcus onnurineus (strain NA1).